Consider the following 649-residue polypeptide: Acetyl-coenzyme A synthetase (649 aa).

CoA-binding positions include 191-194 (RGGR), threonine 311, and asparagine 335. Residues 387-389 (GEP), 411-416 (DTWWQT), aspartate 500, and arginine 515 contribute to the ATP site. Serine 523 is a binding site for CoA. Arginine 526 is a binding site for ATP. Mg(2+)-binding residues include valine 537, phenylalanine 539, and isoleucine 542. Arginine 584 is a CoA binding site. Lysine 609 bears the N6-acetyllysine mark.

Belongs to the ATP-dependent AMP-binding enzyme family. It depends on Mg(2+) as a cofactor. Post-translationally, acetylated. Deacetylation by the SIR2-homolog deacetylase activates the enzyme.

It carries out the reaction acetate + ATP + CoA = acetyl-CoA + AMP + diphosphate. Functionally, catalyzes the conversion of acetate into acetyl-CoA (AcCoA), an essential intermediate at the junction of anabolic and catabolic pathways. AcsA undergoes a two-step reaction. In the first half reaction, AcsA combines acetate with ATP to form acetyl-adenylate (AcAMP) intermediate. In the second half reaction, it can then transfer the acetyl group from AcAMP to the sulfhydryl group of CoA, forming the product AcCoA. The sequence is that of Acetyl-coenzyme A synthetase from Vibrio cholerae serotype O1 (strain ATCC 39315 / El Tor Inaba N16961).